Consider the following 331-residue polypeptide: MKIGVMGAGSWGTTLAKVFSDAGCDVTLWARREEVAREINTEHTNSTYLRGIALPHTLTATTQPTQALCDADVVVLAVPSQTLRGNLAEWCADIPQDALLLSLAKGIEKETFLRMSEVIAEVTGAQPDKVAVLSGPNLAREIAEEQPAATVIACTNEKNAQRIQHALAAPYFRPYTNTDVIGCEIGGACKNVIALACGMASGRGLGENTLATLMTRGLAEISRLGVAMGADPRTLSGLAGLGDLVATCSSPLSRNRTFGARLGEGKTLDEARAATNGQVAEGVISSQSIARLADSLGVDMPITRAVFGVCHRDQNVADMVAALMGRTKKSE.

Residues S10, W11, R31, R32, and K105 each coordinate NADPH. Positions 105 and 135 each coordinate sn-glycerol 3-phosphate. A139 contributes to the NADPH binding site. The sn-glycerol 3-phosphate site is built by K190, D243, S253, R254, and N255. K190 (proton acceptor) is an active-site residue. R254 is a binding site for NADPH. The NADPH site is built by V279 and E281.

It belongs to the NAD-dependent glycerol-3-phosphate dehydrogenase family.

Its subcellular location is the cytoplasm. It catalyses the reaction sn-glycerol 3-phosphate + NAD(+) = dihydroxyacetone phosphate + NADH + H(+). It carries out the reaction sn-glycerol 3-phosphate + NADP(+) = dihydroxyacetone phosphate + NADPH + H(+). It participates in membrane lipid metabolism; glycerophospholipid metabolism. Its function is as follows. Catalyzes the reduction of the glycolytic intermediate dihydroxyacetone phosphate (DHAP) to sn-glycerol 3-phosphate (G3P), the key precursor for phospholipid synthesis. The sequence is that of Glycerol-3-phosphate dehydrogenase [NAD(P)+] from Corynebacterium diphtheriae (strain ATCC 700971 / NCTC 13129 / Biotype gravis).